The chain runs to 476 residues: Monodehydroascorbate reductase 2, peroxisomal (476 aa).

Over 1-3 (MGR) the chain is Cytoplasmic. A helical transmembrane segment spans residues 4–24 (AFVHVILGGGVAAGYAALEFA). Residues 12–15 (GGVA), E40, R47, K52, and 146–147 (RN) each bind FAD. At 25–447 (RRGGYSRGEL…GGLALGEKPT (423 aa)) the chain is on the peroxisomal side. NAD(+) is bound by residues 171 to 177 (GGYIGME), E195, R201, and G260. 173 to 177 (YIGME) serves as a coordination point for NADP(+). 2 residues coordinate NADP(+): R201 and G260. Position 297 (D297) interacts with FAD. 314–315 (EH) is a binding site for NAD(+). 314-315 (EH) is a binding site for NADP(+). Position 316 (V316) interacts with FAD. R320 serves as a coordination point for L-ascorbate. Y346 serves as a coordination point for FAD. Y346 contacts NAD(+). Y346 is a binding site for NADP(+). Residue R348 coordinates L-ascorbate. The helical transmembrane segment at 448-468 (YVWHATAGVIAAASIAAFGYW) threads the bilayer. The Cytoplasmic segment spans residues 469–476 (YGRKRRRW).

The protein belongs to the FAD-dependent oxidoreductase family. FAD is required as a cofactor.

The protein localises to the peroxisome membrane. It carries out the reaction 2 monodehydro-L-ascorbate radical + NADH + H(+) = 2 L-ascorbate + NAD(+). Catalyzes the conversion of monodehydroascorbate to ascorbate, oxidizing NADH in the process. Ascorbate is a major antioxidant against reactive oxygen species (ROS) and nitric oxide (NO). The sequence is that of Monodehydroascorbate reductase 2, peroxisomal from Oryza sativa subsp. japonica (Rice).